Reading from the N-terminus, the 452-residue chain is Bifunctional protein GlmU (452 aa).

The tract at residues 1 to 224 is pyrophosphorylase; that stretch reads MNIVILAAGQ…EWEVLGVNSK (224 aa). UDP-N-acetyl-alpha-D-glucosamine is bound by residues 6 to 9, Lys20, Gln71, 76 to 77, 98 to 100, Gly134, Glu149, Asn164, and Asn222; these read LAAG, GT, and YGD. Residue Asp100 participates in Mg(2+) binding. Asn222 serves as a coordination point for Mg(2+). The tract at residues 225 to 245 is linker; the sequence is VQLAELERQHQLNLAGELLVA. Residues 246 to 452 form an N-acetyltransferase region; it reads GVRLADPARI…GWERPKKVKK (207 aa). Positions 328 and 346 each coordinate UDP-N-acetyl-alpha-D-glucosamine. His358 functions as the Proton acceptor in the catalytic mechanism. Tyr361 and Asn372 together coordinate UDP-N-acetyl-alpha-D-glucosamine. Residues Ala375, 381–382, Ser400, Ala418, and Arg435 each bind acetyl-CoA; that span reads NY.

This sequence in the N-terminal section; belongs to the N-acetylglucosamine-1-phosphate uridyltransferase family. It in the C-terminal section; belongs to the transferase hexapeptide repeat family. As to quaternary structure, homotrimer. The cofactor is Mg(2+).

The protein resides in the cytoplasm. The catalysed reaction is alpha-D-glucosamine 1-phosphate + acetyl-CoA = N-acetyl-alpha-D-glucosamine 1-phosphate + CoA + H(+). The enzyme catalyses N-acetyl-alpha-D-glucosamine 1-phosphate + UTP + H(+) = UDP-N-acetyl-alpha-D-glucosamine + diphosphate. Its pathway is nucleotide-sugar biosynthesis; UDP-N-acetyl-alpha-D-glucosamine biosynthesis; N-acetyl-alpha-D-glucosamine 1-phosphate from alpha-D-glucosamine 6-phosphate (route II): step 2/2. The protein operates within nucleotide-sugar biosynthesis; UDP-N-acetyl-alpha-D-glucosamine biosynthesis; UDP-N-acetyl-alpha-D-glucosamine from N-acetyl-alpha-D-glucosamine 1-phosphate: step 1/1. It functions in the pathway bacterial outer membrane biogenesis; LPS lipid A biosynthesis. Catalyzes the last two sequential reactions in the de novo biosynthetic pathway for UDP-N-acetylglucosamine (UDP-GlcNAc). The C-terminal domain catalyzes the transfer of acetyl group from acetyl coenzyme A to glucosamine-1-phosphate (GlcN-1-P) to produce N-acetylglucosamine-1-phosphate (GlcNAc-1-P), which is converted into UDP-GlcNAc by the transfer of uridine 5-monophosphate (from uridine 5-triphosphate), a reaction catalyzed by the N-terminal domain. The sequence is that of Bifunctional protein GlmU from Dechloromonas aromatica (strain RCB).